The following is a 355-amino-acid chain: UDP-galactose translocator 1 (355 aa).

Residues 1 to 36 (MKFQNVHISHQDEDKEKLLPNDKDVEKADESPSSSR) form a disordered region. Basic and acidic residues predominate over residues 9 to 30 (SHQDEDKEKLLPNDKDVEKADE). Transmembrane regions (helical) follow at residues 40–60 (VFKC…TLTI), 177–197 (WMAI…NVSA), 211–231 (IVGL…GVYF), 282–302 (VWAV…VMRY), 309–329 (SMAS…IFPD), and 330–350 (IFIG…VLLY).

The protein belongs to the nucleotide-sugar transporter family. SLC35A subfamily.

It is found in the membrane. Its subcellular location is the cytoplasmic granule membrane. This is UDP-galactose translocator 1 (ugtp-1) from Caenorhabditis elegans.